A 179-amino-acid polypeptide reads, in one-letter code: Natural killer cells antigen CD94 (179 aa).

Residues M1–R10 are Cytoplasmic-facing. Residues L11–V31 traverse the membrane as a helical; Signal-anchor for type II membrane protein segment. Residues K32–T179 are Extracellular-facing. 4 disulfides stabilise this stretch: C58–C70, C61–C72, C89–C174, and C152–C166. Residues H68–K175 form the C-type lectin domain. The N-linked (GlcNAc...) asparagine glycan is linked to N93.

In terms of assembly, can form disulfide-bonded heterodimer with NKG2 family members KLRC1 and KLRC2. KLRD1-KLRC1 heterodimer interacts with peptide-bound MHC-E-B2M heterotrimeric complex. KLRD1 plays a prominent role in directly interacting with MHC-E. KLRD1-KLRC1 interacts with much higher affinity with peptide-bound MHC-E-B2M than KLRD1-KLRC2. Interacts with the adapter protein TYROBP/DAP12; this interaction is required for cell surface expression and cell activation.

Its subcellular location is the cell membrane. Functionally, immune receptor involved in self-nonself discrimination. In complex with KLRC1 or KLRC2 on cytotoxic and regulatory lymphocyte subsets, recognizes non-classical major histocompatibility (MHC) class Ib molecule MHC-E loaded with self-peptides derived from the signal sequence of classical MHC class Ia and non-classical MHC class Ib molecules. Enables cytotoxic cells to monitor the expression of MHC class I molecules in healthy cells and to tolerate self. Primarily functions as a ligand binding subunit as it lacks the capacity to signal. In terms of biological role, KLRD1-KLRC1 acts as an immune inhibitory receptor. Key inhibitory receptor on natural killer (NK) cells that regulates their activation and effector functions. Dominantly counteracts T cell receptor signaling on a subset of memory/effector CD8-positive T cells as part of an antigen-driven response to avoid autoimmunity. On intraepithelial CD8-positive gamma-delta regulatory T cells triggers TGFB1 secretion, which in turn limits the cytotoxic programming of intraepithelial CD8-positive alpha-beta T cells, distinguishing harmless from pathogenic antigens. In MHC-E-rich tumor microenvironment, acts as an immune inhibitory checkpoint and may contribute to progressive loss of effector functions of NK cells and tumor-specific T cells, a state known as cell exhaustion. Upon MHC-E-peptide binding, transmits intracellular signals through KLRC1 immunoreceptor tyrosine-based inhibition motifs (ITIMs) by recruiting INPP5D/SHIP-1 and INPPL1/SHIP-2 tyrosine phosphatases to ITIMs, and ultimately opposing signals transmitted by activating receptors through dephosphorylation of proximal signaling molecules. KLRD1-KLRC2 acts as an immune activating receptor. On cytotoxic lymphocyte subsets recognizes MHC-E loaded with signal sequence-derived peptides from non-classical MHC class Ib MHC-G molecules, likely playing a role in the generation and effector functions of adaptive NK cells and in maternal-fetal tolerance during pregnancy. Regulates the effector functions of terminally differentiated cytotoxic lymphocyte subsets, and in particular may play a role in adaptive NK cell response to viral infection. Upon MHC-E-peptide binding, transmits intracellular signals via the adapter protein TYROBP/DAP12, triggering the phosphorylation of proximal signaling molecules and cell activation. The protein is Natural killer cells antigen CD94 (Klrd1) of Rattus norvegicus (Rat).